A 488-amino-acid polypeptide reads, in one-letter code: Glutamyl-tRNA(Gln) amidotransferase subunit A (488 aa).

Active-site charge relay system residues include Lys-77 and Ser-152. Ser-176 serves as the catalytic Acyl-ester intermediate.

Belongs to the amidase family. GatA subfamily. As to quaternary structure, heterotrimer of A, B and C subunits.

The catalysed reaction is L-glutamyl-tRNA(Gln) + L-glutamine + ATP + H2O = L-glutaminyl-tRNA(Gln) + L-glutamate + ADP + phosphate + H(+). Allows the formation of correctly charged Gln-tRNA(Gln) through the transamidation of misacylated Glu-tRNA(Gln) in organisms which lack glutaminyl-tRNA synthetase. The reaction takes place in the presence of glutamine and ATP through an activated gamma-phospho-Glu-tRNA(Gln). This Streptococcus pyogenes serotype M5 (strain Manfredo) protein is Glutamyl-tRNA(Gln) amidotransferase subunit A.